The primary structure comprises 98 residues: NADH-ubiquinone oxidoreductase chain 4L (98 aa).

3 consecutive transmembrane segments (helical) span residues 1-21, 26-46, and 61-81; these read MNLIDLILIAIYVIGISGLIF, IINILIISELNLGTLGMLFVL, and LYILTFTAAESAIGLAIVVIL.

This sequence belongs to the complex I subunit 4L family.

The protein localises to the mitochondrion membrane. It catalyses the reaction a ubiquinone + NADH + 5 H(+)(in) = a ubiquinol + NAD(+) + 4 H(+)(out). Core subunit of the mitochondrial membrane respiratory chain NADH dehydrogenase (Complex I) that is believed to belong to the minimal assembly required for catalysis. Complex I functions in the transfer of electrons from NADH to the respiratory chain. The immediate electron acceptor for the enzyme is believed to be ubiquinone. This Dictyostelium citrinum (Slime mold) protein is NADH-ubiquinone oxidoreductase chain 4L (nad4L).